The following is a 688-amino-acid chain: Acyl-CoA synthetase short-chain family member B, mitochondrial (688 aa).

It belongs to the ATP-dependent AMP-binding enzyme family.

The protein resides in the mitochondrion. It catalyses the reaction acetate + ATP + CoA = acetyl-CoA + AMP + diphosphate. Its function is as follows. Activates acetate so that it can be used for lipid synthesis or for energy generation. In Dictyostelium discoideum (Social amoeba), this protein is Acyl-CoA synthetase short-chain family member B, mitochondrial (aslB).